The sequence spans 55 residues: Ferredoxin (55 aa).

2 consecutive 4Fe-4S ferredoxin-type domains span residues 2 to 27 and 28 to 55; these read FVIN…TQGD and TQFV…PNQE. [4Fe-4S] cluster contacts are provided by cysteine 8, cysteine 11, cysteine 14, cysteine 18, cysteine 37, cysteine 40, cysteine 43, and cysteine 47.

Requires [4Fe-4S] cluster as cofactor.

Functionally, ferredoxins are iron-sulfur proteins that transfer electrons in a wide variety of metabolic reactions. The chain is Ferredoxin from Clostridium butyricum.